Here is a 500-residue protein sequence, read N- to C-terminus: Probable cytosol aminopeptidase (500 aa).

Residues lysine 261 and aspartate 266 each contribute to the Mn(2+) site. Lysine 273 is a catalytic residue. Residues aspartate 284, aspartate 343, and glutamate 345 each contribute to the Mn(2+) site. Residue arginine 347 is part of the active site.

The protein belongs to the peptidase M17 family. It depends on Mn(2+) as a cofactor.

It is found in the cytoplasm. It catalyses the reaction Release of an N-terminal amino acid, Xaa-|-Yaa-, in which Xaa is preferably Leu, but may be other amino acids including Pro although not Arg or Lys, and Yaa may be Pro. Amino acid amides and methyl esters are also readily hydrolyzed, but rates on arylamides are exceedingly low.. The catalysed reaction is Release of an N-terminal amino acid, preferentially leucine, but not glutamic or aspartic acids.. Its function is as follows. Presumably involved in the processing and regular turnover of intracellular proteins. Catalyzes the removal of unsubstituted N-terminal amino acids from various peptides. In Bacillus subtilis (strain 168), this protein is Probable cytosol aminopeptidase (pepA).